A 1166-amino-acid chain; its full sequence is Serine-aspartate repeat-containing protein E (1166 aa).

Residues 1–52 form the signal peptide; sequence MINRDNKKAITKKGMISNRLNKFSIRKYTVGTASILVGTTLIFGLGNQEAKA. A YSIRK-G/S signaling motif motif is present at residues 23-34; sequence FSIRKYTVGTAS. The segment at 53 to 606 is ligand binding A region; that stretch reads AENTSTENAK…GDGTVKPEEK (554 aa). Residues 54-230 are disordered; the sequence is ENTSTENAKQ…SKEELKNNPE (177 aa). A compositionally biased stretch (basic and acidic residues) spans 61 to 75; the sequence is AKQDDATTSDNKEVV. Over residues 77 to 90 the composition is skewed to low complexity; that stretch reads ETENNSTTENNSTN. Basic and acidic residues predominate over residues 92–108; that stretch reads IKKETNTDSQPEAKKES. The span at 118–129 shows a compositional bias: polar residues; the sequence is NNVTATTETKPQ. The segment covering 130-145 has biased composition (basic and acidic residues); sequence NIEKENVKPSTDKTAT. Positions 166-178 are enriched in low complexity; it reads TTKPSTSEPSTSE. The span at 179-212 shows a compositional bias: polar residues; it reads IQTKPTTPQESTNIENSQPQPTPSKVDNQVTDAT. Positions 221–230 are enriched in basic and acidic residues; that stretch reads SKEELKNNPE. CNA-B domains lie at 607–719, 720–829, and 830–940; these read LYKI…YKEP, KYNL…YKTP, and KYSL…EEDT. The segment at 904-1141 is disordered; the sequence is VTNTTEDDKD…TGSENNGSNN (238 aa). Composition is skewed to acidic residues over residues 908 to 918 and 935 to 1105; these read TEDDKDADGGE and YFEE…DSDS. The short motif at 1129 to 1133 is the LPXTG sorting signal element; sequence LPETG. At Thr-1132 the chain carries Pentaglycyl murein peptidoglycan amidated threonine. The propeptide at 1133–1166 is removed by sortase; sequence GSENNGSNNATLFGGLFAALGSLLLFGRRKKQNK.

It belongs to the serine-aspartate repeat-containing protein (SDr) family. Interacts with host complement factor H/CFAH (via C-terminus). Interacts with host complement regulator C4BPA.

Its subcellular location is the secreted. The protein localises to the cell wall. Functionally, cell surface-associated calcium-binding protein which plays an important role in adhesion and pathogenesis. Contributes to the resistance to killing by innate immune components in blood and thus attenuates bacterial clearance by interacting with host complement factor H/CFAH and modulating its activity. Inhibits also bacterial opsonization and killing by interacting with host complement regulator C4BPA and thus inhibiting classical complement pathway activation. The protein is Serine-aspartate repeat-containing protein E (sdrE) of Staphylococcus aureus (strain Newman).